A 283-amino-acid polypeptide reads, in one-letter code: Elongation factor Ts (283 aa).

Residues 80–83 (TDFV) are involved in Mg(2+) ion dislocation from EF-Tu.

The protein belongs to the EF-Ts family.

Its subcellular location is the cytoplasm. Functionally, associates with the EF-Tu.GDP complex and induces the exchange of GDP to GTP. It remains bound to the aminoacyl-tRNA.EF-Tu.GTP complex up to the GTP hydrolysis stage on the ribosome. The sequence is that of Elongation factor Ts from Shigella boydii serotype 18 (strain CDC 3083-94 / BS512).